The following is a 501-amino-acid chain: Probable cytosol aminopeptidase (501 aa).

Lys-268 and Asp-273 together coordinate Mn(2+). Residue Lys-280 is part of the active site. 3 residues coordinate Mn(2+): Asp-291, Asp-350, and Glu-352. Residue Arg-354 is part of the active site.

The protein belongs to the peptidase M17 family. It depends on Mn(2+) as a cofactor.

The protein localises to the cytoplasm. It catalyses the reaction Release of an N-terminal amino acid, Xaa-|-Yaa-, in which Xaa is preferably Leu, but may be other amino acids including Pro although not Arg or Lys, and Yaa may be Pro. Amino acid amides and methyl esters are also readily hydrolyzed, but rates on arylamides are exceedingly low.. The catalysed reaction is Release of an N-terminal amino acid, preferentially leucine, but not glutamic or aspartic acids.. Functionally, presumably involved in the processing and regular turnover of intracellular proteins. Catalyzes the removal of unsubstituted N-terminal amino acids from various peptides. This Pseudoalteromonas atlantica (strain T6c / ATCC BAA-1087) protein is Probable cytosol aminopeptidase.